Here is a 264-residue protein sequence, read N- to C-terminus: Apolipoprotein A-I (264 aa).

The signal sequence occupies residues 1 to 18 (MKAVVLAVAVLFLTGSQA). 2 repeat units span residues 67 to 88 (LNLL…EQLG) and 89 to 110 (PVTR…QEMN). The tract at residues 67-264 (LNLLENWDTF…DEATQKLNTQ (198 aa)) is 10 X approximate tandem repeats. Methionine 109 is subject to Methionine sulfoxide. A 3; half-length repeat occupies 111 to 121 (KDLEEVKQKVQ). 3 repeat units span residues 122–143 (PYLD…PKVE), 144–165 (PLGA…KQLV), and 166–187 (PLGE…TKLA). One copy of the 7; truncated repeat lies at 188–207 (PYSDQMRDRLAERLTALRDN). Methionine 193 is modified (methionine sulfoxide). Residues 208–229 (PKLAEYHARATEHLKKLGEKTK) form repeat 8. The 9; half-length repeat unit spans residues 230–240 (PTLEDLRQGLM). At methionine 240 the chain carries Methionine sulfoxide. Repeat 10 spans residues 241 to 264 (PWLESLKAKALSVLDEATQKLNTQ).

This sequence belongs to the apolipoprotein A1/A4/E family. In terms of assembly, homodimer. Interacts with APOA1BP and CLU. Component of a sperm activating protein complex (SPAP), consisting of APOA1, an immunoglobulin heavy chain, an immunoglobulin light chain and albumin. Interacts with NDRG1. Interacts with SCGB3A2. Interacts with NAXE and YJEFN3. Post-translationally, glycosylated. In terms of processing, palmitoylated. Phosphorylation sites are present in the extracellular medium.

The protein resides in the secreted. In terms of biological role, participates in the reverse transport of cholesterol from tissues to the liver for excretion by promoting cholesterol efflux from tissues and by acting as a cofactor for the lecithin cholesterol acyltransferase (LCAT). As part of the SPAP complex, activates spermatozoa motility. The chain is Apolipoprotein A-I (Apoa1) from Nannospalax galili (Northern Israeli blind subterranean mole rat).